A 542-amino-acid chain; its full sequence is Heterogeneous nuclear ribonucleoprotein L-like (542 aa).

Residues 1 to 71 (MSSSSSSPRE…QPEAGGSHHK (71 aa)) are disordered. Residues 18 to 29 (YESQAKRLKTEE) show a composition bias toward basic and acidic residues. A Glycyl lysine isopeptide (Lys-Gly) (interchain with G-Cter in SUMO2) cross-link involves residue K26. Position 35 is a phosphoserine (S35). T46 is subject to Phosphothreonine. Gly residues predominate over residues 48–58 (RGGGDGGGGGR). Phosphoserine is present on residues S59, S68, and S75. RRM domains follow at residues 76–150 (PVVH…YSTS), 166–244 (NKVL…YARP), and 335–409 (SVVM…VSKQ). A Glycyl lysine isopeptide (Lys-Gly) (interchain with G-Cter in SUMO2) cross-link involves residue K491.

Interacts with HNRNPL. As to expression, widely expressed. Detected in bone marrow stroma cells, skeletal muscle, heart, placenta, pancreas, kidney and lung.

Its function is as follows. RNA-binding protein that functions as a regulator of alternative splicing for multiple target mRNAs, including PTPRC/CD45 and STAT5A. Required for alternative splicing of PTPRC. This Homo sapiens (Human) protein is Heterogeneous nuclear ribonucleoprotein L-like (HNRNPLL).